Consider the following 54-residue polypeptide: U7-myrmicitoxin-Tb1a (54 aa).

The signal sequence occupies residues methionine 1 to alanine 26. Residues aspartate 27–alanine 36 constitute a propeptide that is removed on maturation. Cysteine 40 and cysteine 49 are oxidised to a cystine.

As to expression, expressed by the venom gland.

The protein localises to the secreted. In terms of biological role, venom protein with unknown function. Does not induce paralysis when a high dose is administered by intrathoracic injection into the blowfly Lucilia caesar. This chain is U7-myrmicitoxin-Tb1a, found in Tetramorium bicarinatum (Tramp ant).